The chain runs to 252 residues: Probable transcriptional regulatory protein HNE_0161 (252 aa).

The protein belongs to the TACO1 family.

It localises to the cytoplasm. In Hyphomonas neptunium (strain ATCC 15444), this protein is Probable transcriptional regulatory protein HNE_0161.